We begin with the raw amino-acid sequence, 98 residues long: Small ribosomal subunit protein uS17B (98 aa).

Belongs to the universal ribosomal protein uS17 family. Part of the 30S ribosomal subunit.

In terms of biological role, one of the primary rRNA binding proteins, it binds specifically to the 5'-end of 16S ribosomal RNA. This Bacteroides thetaiotaomicron (strain ATCC 29148 / DSM 2079 / JCM 5827 / CCUG 10774 / NCTC 10582 / VPI-5482 / E50) protein is Small ribosomal subunit protein uS17B.